The chain runs to 437 residues: Sulfite reductase, dissimilatory-type subunit alpha (437 aa).

[4Fe-4S] cluster is bound by residues C177, C183, C221, C225, C284, C303, C306, and C309. Residues 294–322 enclose the 4Fe-4S ferredoxin-type domain; the sequence is SKLSIDNKECVRCMHCINTMPRALHIGDE.

In terms of assembly, heterohexamer of two alpha, two beta and two gamma subunits.

Functionally, part of the complex that catalyzes the reduction of sulfite to sulfide. The alpha and beta subunits may have arisen by gene duplication. They both bind 2 iron-sulfur clusters, but the alpha subunit seems to be catalytically inactive, due to substitutions along the putative substrate access channel, and because it binds sirohydrochlorin (the dematallated form of siroheme) instead of siroheme. The polypeptide is Sulfite reductase, dissimilatory-type subunit alpha (dsvA) (Nitratidesulfovibrio vulgaris (strain ATCC 29579 / DSM 644 / CCUG 34227 / NCIMB 8303 / VKM B-1760 / Hildenborough) (Desulfovibrio vulgaris)).